Here is a 228-residue protein sequence, read N- to C-terminus: Ephrin-A5 (228 aa).

The first 20 residues, 1 to 20 (MLHVEMLTLVFLVLWMCVFS), serve as a signal peptide directing secretion. One can recognise an Ephrin RBD domain in the interval 29–162 (ADRYAVYWNS…KLKVFVRPTN (134 aa)). N-linked (GlcNAc...) asparagine glycosylation occurs at Asn37. Intrachain disulfides connect Cys62–Cys102 and Cys90–Cys151. Residues 186–205 (EPADDTVHESAEPSRGENAA) form a disordered region. Basic and acidic residues predominate over residues 190–200 (DTVHESAEPSR). Residue Asn203 is the site of GPI-anchor amidated asparagine attachment. Positions 204-228 (AAQTPRIPSRLLAILLFLLAMLLTL) are cleaved as a propeptide — removed in mature form.

The protein belongs to the ephrin family. As to quaternary structure, binds to EPHB2. Interacts with EPHA8; activates EPHA8. Binds to the receptor tyrosine kinases EPHA2, EPHA3 and EPHB1. Forms a ternary EFNA5-EPHA3-ADAM10 complex mediating EFNA5 extracellular domain shedding by ADAM10 which regulates the EFNA5-EPHA3 complex internalization and function.

Its subcellular location is the cell membrane. It is found in the membrane. It localises to the caveola. In terms of biological role, cell surface GPI-bound ligand for Eph receptors, a family of receptor tyrosine kinases which are crucial for migration, repulsion and adhesion during neuronal, vascular and epithelial development. Binds promiscuously Eph receptors residing on adjacent cells, leading to contact-dependent bidirectional signaling into neighboring cells. The signaling pathway downstream of the receptor is referred to as forward signaling while the signaling pathway downstream of the ephrin ligand is referred to as reverse signaling. Induces compartmentalized signaling within a caveolae-like membrane microdomain when bound to the extracellular domain of its cognate receptor. This signaling event requires the activity of the Fyn tyrosine kinase. Activates the EPHA3 receptor to regulate cell-cell adhesion and cytoskeletal organization. With the receptor EPHA2 may regulate lens fiber cells shape and interactions and be important for lens transparency maintenance. May function actively to stimulate axon fasciculation. The interaction of EFNA5 with EPHA5 also mediates communication between pancreatic islet cells to regulate glucose-stimulated insulin secretion. Cognate/functional ligand for EPHA7, their interaction regulates brain development modulating cell-cell adhesion and repulsion. This chain is Ephrin-A5 (EFNA5), found in Homo sapiens (Human).